A 430-amino-acid polypeptide reads, in one-letter code: Sulfide-quinone reductase (430 aa).

FAD contacts are provided by residues 9 to 13 (GGGVG), 34 to 36 (SDR), 42 to 43 (TP), and T105. C156 functions as the Cysteine persulfide intermediate in the catalytic mechanism. Intrachain disulfides connect C280-C422 and C419-C430. 2 residues coordinate FAD: V294 and G314. Residue I346 coordinates a quinone. The Cysteine persulfide intermediate role is filled by C347. K382 is a binding site for FAD.

It belongs to the SQRD family. Homotrimer. FAD serves as cofactor.

The protein resides in the membrane. It carries out the reaction n a quinone + n hydrogen sulfide + n H(+) = polysulfur(n-2) + n a quinol. In terms of biological role, catalyzes the oxidation of hydrogen sulfide, with the help of a quinone. Consecutive reaction cycles lead to the accumulation of a polysulfide product on the active site Cys residues; these products are released when they exceed a critical length, typically as cyclooctasulfur. In Aquifex aeolicus (strain VF5), this protein is Sulfide-quinone reductase.